The chain runs to 256 residues: Thiazole synthase (256 aa).

The active-site Schiff-base intermediate with DXP is the lysine 98. 1-deoxy-D-xylulose 5-phosphate is bound by residues glycine 159, 185-186 (AG), and 207-208 (NT).

It belongs to the ThiG family. Homotetramer. Forms heterodimers with either ThiH or ThiS.

It is found in the cytoplasm. It catalyses the reaction [ThiS sulfur-carrier protein]-C-terminal-Gly-aminoethanethioate + 2-iminoacetate + 1-deoxy-D-xylulose 5-phosphate = [ThiS sulfur-carrier protein]-C-terminal Gly-Gly + 2-[(2R,5Z)-2-carboxy-4-methylthiazol-5(2H)-ylidene]ethyl phosphate + 2 H2O + H(+). It functions in the pathway cofactor biosynthesis; thiamine diphosphate biosynthesis. In terms of biological role, catalyzes the rearrangement of 1-deoxy-D-xylulose 5-phosphate (DXP) to produce the thiazole phosphate moiety of thiamine. Sulfur is provided by the thiocarboxylate moiety of the carrier protein ThiS. In vitro, sulfur can be provided by H(2)S. This chain is Thiazole synthase, found in Syntrophobacter fumaroxidans (strain DSM 10017 / MPOB).